The following is a 395-amino-acid chain: ATP synthase subunit beta, chloroplastic (395 aa).

Gly72–Thr79 provides a ligand contact to ATP.

The protein belongs to the ATPase alpha/beta chains family. F-type ATPases have 2 components, CF(1) - the catalytic core - and CF(0) - the membrane proton channel. CF(1) has five subunits: alpha(3), beta(3), gamma(1), delta(1), epsilon(1). CF(0) has four main subunits: a(1), b(1), b'(1) and c(9-12).

It localises to the plastid. Its subcellular location is the chloroplast thylakoid membrane. It catalyses the reaction ATP + H2O + 4 H(+)(in) = ADP + phosphate + 5 H(+)(out). Its function is as follows. Produces ATP from ADP in the presence of a proton gradient across the membrane. The catalytic sites are hosted primarily by the beta subunits. The sequence is that of ATP synthase subunit beta, chloroplastic from Microlepia platyphylla (Plate fern).